A 301-amino-acid polypeptide reads, in one-letter code: Protein ARMCX6 (301 aa).

The segment at 1 to 6 is mitochondrion outer membrane (MOM)-targeting sequence; that stretch reads MGRARE. Over 1–7 the chain is Mitochondrial intermembrane; it reads MGRAREM. The chain crosses the membrane as a helical; Signal-anchor span at residues 8–25; the sequence is GWMAAGLMIGAGACYCMY. Residues 26–36 are mitochondrion outer membrane (MOM)-targeting sequence; the sequence is KLTMGRDEGNE. The Cytoplasmic segment spans residues 26-301; it reads KLTMGRDEGN…REMLVEAISP (276 aa). The tract at residues 70–105 is disordered; the sequence is SEDGEWDEPGAPGGTEDRRSGGGKANRAHPTKQRPF.

The protein belongs to the eutherian X-chromosome-specific Armcx family.

It is found in the mitochondrion. It localises to the mitochondrion outer membrane. In terms of biological role, may regulate the dynamics and distribution of mitochondria in neural cells. The polypeptide is Protein ARMCX6 (Armcx6) (Rattus norvegicus (Rat)).